We begin with the raw amino-acid sequence, 498 residues long: ATP synthase subunit beta, chloroplastic (498 aa).

Position 172–179 (172–179 (GGAGVGKT)) interacts with ATP.

This sequence belongs to the ATPase alpha/beta chains family. In terms of assembly, F-type ATPases have 2 components, CF(1) - the catalytic core - and CF(0) - the membrane proton channel. CF(1) has five subunits: alpha(3), beta(3), gamma(1), delta(1), epsilon(1). CF(0) has four main subunits: a(1), b(1), b'(1) and c(9-12).

It localises to the plastid. The protein localises to the chloroplast thylakoid membrane. It catalyses the reaction ATP + H2O + 4 H(+)(in) = ADP + phosphate + 5 H(+)(out). Functionally, produces ATP from ADP in the presence of a proton gradient across the membrane. The catalytic sites are hosted primarily by the beta subunits. The protein is ATP synthase subunit beta, chloroplastic of Oryza nivara (Indian wild rice).